We begin with the raw amino-acid sequence, 174 residues long: Inner membrane protein p22 (174 aa).

Residues M1 to T7 lie on the Intravirion side of the membrane. Residues I8 to Y28 form a helical membrane-spanning segment. At H29–A174 the chain is on the virion surface side.

Belongs to the asfivirus inner membrane protein p22 family.

It localises to the virion membrane. The protein resides in the host cell membrane. The protein is Inner membrane protein p22 of African swine fever virus (isolate Pig/Kenya/KEN-50/1950) (ASFV).